A 507-amino-acid polypeptide reads, in one-letter code: MLSKYELIKPDIGSSHGNITKVYEIVGGKPLRGQVKVSGSKNAALPVLAASLLCKEPLQLTNLPKILDVTNMIQCMEALGKRFEFINTNTIKIGNREMDTLTIPKEAARQIRASIILLGPLVAQYPKVILPLPGGCSIGKRPIDLHISALNALGVDIVELPDCLVCSRRYARLQGNTINFSIKTVTGTENAMMAAVLAEGTTIINNAAMEPEIVDLANFLNRLGAKINGGGSDRITISGVDKLNSCGSYSIMADRIEAGTYLVAAAMTRGSISVKGVNPDYLVAVLSELKCAGAKITCDSDSIQLDMGEEYGESLNITTKPYPGFPTDLQSLFLSLTCVLRGNSYLCETLFEDRFQIVQELKKMGANISLKDNTAHIKGVSRLRGSQVNATDLRSGAALVCASLAAEGITQIFAIEHIERGYEDLILKLKALGANIKLIENTHVTSTELSDSHFKEATSSETRIQRASLIETIVTPSITTFGQFKRVPTGEVTELEKQQTPYLHHIM.

41-42 (KN) contacts phosphoenolpyruvate. Arginine 112 contacts UDP-N-acetyl-alpha-D-glucosamine. Residue cysteine 136 is the Proton donor of the active site. Cysteine 136 bears the 2-(S-cysteinyl)pyruvic acid O-phosphothioketal mark. UDP-N-acetyl-alpha-D-glucosamine-binding positions include 141-145 (RPIDL), aspartate 328, and leucine 350.

This sequence belongs to the EPSP synthase family. MurA subfamily.

The protein resides in the cytoplasm. The enzyme catalyses phosphoenolpyruvate + UDP-N-acetyl-alpha-D-glucosamine = UDP-N-acetyl-3-O-(1-carboxyvinyl)-alpha-D-glucosamine + phosphate. It functions in the pathway cell wall biogenesis; peptidoglycan biosynthesis. Cell wall formation. Adds enolpyruvyl to UDP-N-acetylglucosamine. The protein is UDP-N-acetylglucosamine 1-carboxyvinyltransferase 1 of Legionella pneumophila (strain Lens).